Reading from the N-terminus, the 473-residue chain is Photosystem II CP43 reaction center protein (473 aa).

The propeptide occupies 1–14 (MKTLYSLRRFYPVE). T15 carries the N-acetylthreonine modification. Phosphothreonine is present on T15. The next 5 membrane-spanning stretches (helical) occupy residues 69 to 93 (LFEV…PHLA), 134 to 155 (LLGP…KDRN), 178 to 200 (KALY…RKIT), 255 to 275 (KPFA…LSYS), and 291 to 312 (WFNN…ASQA). E367 provides a ligand contact to [CaMn4O5] cluster. The helical transmembrane segment at 447–471 (RARAAAAGFEKGIDRDLEPVLSMTP) threads the bilayer.

Belongs to the PsbB/PsbC family. PsbC subfamily. As to quaternary structure, PSII is composed of 1 copy each of membrane proteins PsbA, PsbB, PsbC, PsbD, PsbE, PsbF, PsbH, PsbI, PsbJ, PsbK, PsbL, PsbM, PsbT, PsbX, PsbY, PsbZ, Psb30/Ycf12, at least 3 peripheral proteins of the oxygen-evolving complex and a large number of cofactors. It forms dimeric complexes. It depends on Binds multiple chlorophylls and provides some of the ligands for the Ca-4Mn-5O cluster of the oxygen-evolving complex. It may also provide a ligand for a Cl- that is required for oxygen evolution. PSII binds additional chlorophylls, carotenoids and specific lipids. as a cofactor.

The protein resides in the plastid. Its subcellular location is the chloroplast thylakoid membrane. One of the components of the core complex of photosystem II (PSII). It binds chlorophyll and helps catalyze the primary light-induced photochemical processes of PSII. PSII is a light-driven water:plastoquinone oxidoreductase, using light energy to abstract electrons from H(2)O, generating O(2) and a proton gradient subsequently used for ATP formation. This is Photosystem II CP43 reaction center protein from Phalaenopsis aphrodite subsp. formosana (Moth orchid).